The sequence spans 61 residues: Small ribosomal subunit protein uS14 (61 aa).

Zn(2+) is bound by residues Cys-24, Cys-27, Cys-40, and Cys-43.

It belongs to the universal ribosomal protein uS14 family. Zinc-binding uS14 subfamily. In terms of assembly, part of the 30S ribosomal subunit. Contacts proteins S3 and S10. Zn(2+) serves as cofactor.

Binds 16S rRNA, required for the assembly of 30S particles and may also be responsible for determining the conformation of the 16S rRNA at the A site. This chain is Small ribosomal subunit protein uS14, found in Borreliella afzelii (strain PKo) (Borrelia afzelii).